The sequence spans 617 residues: Cytoplasmic polyadenylation element-binding protein 1 (617 aa).

Residues 1–38 (MQSQLKACGDAPAPSCSLHHRRTISKKPSNGGNSGGGG) form a disordered region. 2 RRM domains span residues 273–377 (RKVF…AWRL) and 394–465 (RTVF…HADT). 2 disordered regions span residues 534–568 (DQTRILPRPPHHSTSHYHHRSTPSHHHNHTHQNVT) and 592–617 (NQNNNSANSTPPQMKQFSAIPTAIGY). Positions 542 to 563 (PPHHSTSHYHHRSTPSHHHNHT) are enriched in basic residues.

In terms of assembly, interacts with fbf-1.

Cytoplasmic polyadenylation element binding protein that binds to and regulates the translation of specific mRNAs. Essential for progression through meiosis. Involved in spermatogenesis. The protein is Cytoplasmic polyadenylation element-binding protein 1 (cpb-1) of Caenorhabditis japonica.